A 256-amino-acid chain; its full sequence is uncharacterized protein (256 aa).

This is an uncharacterized protein from Pasteurella multocida (strain Pm70).